A 198-amino-acid chain; its full sequence is Nucleoplasmin (198 aa).

An acidic tract A1 region spans residues 35–38 (SDED). Acidic residues predominate over residues 125–145 (SWAEEEGEEEVEEEEEEEDPE). Residues 125–198 (SWAEEEGEEE…GRGRKPAAKK (74 aa)) form a disordered region. Positions 128-145 (EEEGEEEVEEEEEEEDPE) are acidic tract A2. The segment covering 150-167 (AVKRPAASKKGSQAKKKK) has biased composition (basic residues). The Bipartite nuclear localization signal motif lies at 152-167 (KRPAASKKGSQAKKKK). Positions 172-174 (EEE) are acidic tract A3. Positions 183–198 (KKGKGAGRGRKPAAKK) are enriched in basic residues.

It belongs to the nucleoplasmin family. As to quaternary structure, homopentamer. Expressed in oocytes.

It localises to the nucleus. Functionally, acts as a chaperone for histones, such as histone H2A-H2B, and thus regulates the assembly of nucleosome cores. Involved in chromatin remodeling, especially during fertilization and early embryonic development. May be involved in sperm chromatin decondensation during fertilization. The chain is Nucleoplasmin from Rhinella marina (Cane toad).